Here is an 883-residue protein sequence, read N- to C-terminus: Glutamate receptor 2 (883 aa).

A signal peptide spans 1-21 (MQKIMHISVLLSPVLWGLIFG). Over 22–543 (VSSNSIQIGG…GVFSFLDPLA (522 aa)) the chain is Extracellular. Residues Cys-78 and Cys-330 are joined by a disulfide bond. N-linked (GlcNAc...) asparagine glycans are attached at residues Asn-256, Asn-370, Asn-406, and Asn-413. Positions 499, 501, and 506 each coordinate L-glutamate. A helical transmembrane segment spans residues 544–564 (YEIWMCIVFAYIGVSVVLFLV). Residues 565 to 591 (SRFSPYEWHTEEFEDGRETQSSESTNE) are Cytoplasmic-facing. The segment at residues 592 to 607 (FGIFNSLWFSLGAFMQ) is an intramembrane region (helical; Pore-forming). The stretch at 608-610 (QGC) is an intramembrane region. The S-palmitoyl cysteine moiety is linked to residue Cys-610. At 611 to 616 (DISPRS) the chain is on the cytoplasmic side. Residues 617–637 (LSGRIVGGVWWFFTLIIISSY) traverse the membrane as a helical segment. The Extracellular segment spans residues 638–812 (TANLAAFLTV…EKTSALSLSN (175 aa)). Residues Ser-675 and Thr-676 each coordinate L-glutamate. Ser-683 carries the phosphoserine; by PKC modification. Position 717 is a phosphoserine; by PKG (Ser-717). Position 726 (Glu-726) interacts with L-glutamate. The cysteines at positions 739 and 794 are disulfide-linked. The helical transmembrane segment at 813–833 (VAGVFYILVGGLGLAMLVALI) threads the bilayer. The Cytoplasmic portion of the chain corresponds to 834-883 (EFCYKSRAEAKRMKVAKNPQNINPSSSQNSQNFATYKEGYNVYGIESVKI). A lipid anchor (S-palmitoyl cysteine) is attached at Cys-836. Residues Ser-860 and Ser-863 each carry the phosphoserine modification. Positions 867 to 877 (ATYKEGYNVYG) are required for interaction with IQSEC1. A Phosphotyrosine modification is found at Tyr-876. Residue Ser-880 is modified to Phosphoserine.

It belongs to the glutamate-gated ion channel (TC 1.A.10.1) family. GRIA2 subfamily. Homotetramer or heterotetramer of pore-forming glutamate receptor subunits. Tetramers may be formed by the dimerization of dimers. May interact with MPP4. Forms a ternary complex with GRIP1 and CSPG4. Interacts with ATAD1 in an ATP-dependent manner. ATAD1-catalyzed ATP hydrolysis disrupts binding to ATAD1 and to GRIP1 and leads to AMPAR complex disassembly. Interacts with GRIP2. Interacts with GRIP1. Interacts with NSF via its C-terminus. Interacts with CACNG2, PICK1 and GRIP2. Interacts with GRIA1 and SYNDIG1. Part of a complex containing GRIA2, NSF and NAPA and/or NAPB. Interacts with SNX27 (via PDZ domain); the interaction is required for recycling to the plasma membrane when endocytosed and prevent degradation in lysosomes. Interacts with LRFN1. Found in a complex with GRIA1, GRIA3, GRIA4, CNIH2, CNIH3, CACNG2, CACNG3, CACNG4, CACNG5, CACNG7 and CACNG8. Interacts with CACNG5. Interacts with OLFM2. Interacts with AP4B1, AP4E1 and AP4M1; probably indirect it mediates the somatodendritic localization of GRIA2 in neurons. Forms a complex with GRIP1, NSG1 and STX12; controls the intracellular fate of AMPAR and the endosomal sorting of the GRIA2 subunit toward recycling and membrane targeting. Interacts with IQSEC1; the interaction is required for ARF6 activation. Interacts (heterotetramer form) with CNIH2 and CNIH3; this interaction promotes expression at the plasma membrane and extensively modulates their gating properties by slowing deactivation and desensitization kinetics. Post-translationally, palmitoylated. Depalmitoylated upon L-glutamate stimulation. Cys-610 palmitoylation leads to Golgi retention and decreased cell surface expression. In contrast, Cys-836 palmitoylation does not affect cell surface expression but regulates stimulation-dependent endocytosis. Phosphorylation at Tyr-876 is required for interaction with IQSEC1 and ARF6 activation, which in turn triggers AMPAR internalization for persistent synaptic depression. In terms of processing, ubiquitinated by RNF167, leading to its degradation. Post-translationally, N-glycosylated. As to expression, detected in forebrain. Detected in dendrites of neuronal cells. Expressed in the pyramidal cell layers of CA1 and CA3 and in the granule cell layer of the dentate gyrus.

The protein resides in the cell membrane. Its subcellular location is the postsynaptic cell membrane. It localises to the postsynaptic density membrane. It catalyses the reaction Ca(2+)(in) = Ca(2+)(out). The enzyme catalyses Na(+)(in) = Na(+)(out). In terms of biological role, ionotropic glutamate receptor that functions as a ligand-gated cation channel, gated by L-glutamate and glutamatergic agonists such as alpha-amino-3-hydroxy-5-methyl-4-isoxazolepropionic acid (AMPA), quisqualic acid, and kainic acid. L-glutamate acts as an excitatory neurotransmitter at many synapses in the central nervous system and plays an important role in fast excitatory synaptic transmission. Binding of the excitatory neurotransmitter L-glutamate induces a conformation change, leading to the opening of the cation channel, and thereby converts the chemical signal to an electrical impulse upon entry of monovalent and divalent cations such as sodium and calcium. The receptor then desensitizes rapidly and enters in a transient inactive state, characterized by the presence of bound agonist. In the presence of CACNG4 or CACNG7 or CACNG8, shows resensitization which is characterized by a delayed accumulation of current flux upon continued application of L-glutamate. Through complex formation with NSG1, GRIP1 and STX12 controls the intracellular fate of AMPAR and the endosomal sorting of the GRIA2 subunit toward recycling and membrane targeting. This chain is Glutamate receptor 2, found in Rattus norvegicus (Rat).